A 5628-amino-acid chain; its full sequence is Polyketide synthase ThaG (5628 aa).

Residues 13-448 (HDDIAVIGIA…GTNAHVVLRE (436 aa)) enclose the Ketosynthase family 3 (KS3) 1 domain. Residues cysteine 184, histidine 319, and histidine 361 each act as for beta-ketoacyl synthase 1 activity in the active site. Disordered stretches follow at residues 552 to 613 (GNLV…DGPT) and 1156 to 1183 (ASPG…RAEA). Over residues 559 to 589 (GPHDEQADHDGSGEHGEHGERARAGADDLSR) the composition is skewed to basic and acidic residues. The span at 1156 to 1173 (ASPGAASSGAAAPNAASD) shows a compositional bias: low complexity. Residues 1174 to 1183 (ASRDTERAEA) show a composition bias toward basic and acidic residues. In terms of domain architecture, Carrier 1 spans 1209–1286 (AHGSARLPAL…RLAGHLATRL (78 aa)). The residue at position 1246 (serine 1246) is an O-(pantetheine 4'-phosphoryl)serine. Residues 1373 to 1781 (YEPIAIVGMS…GTNAHVIVEA (409 aa)) form the Ketosynthase family 3 (KS3) 2 domain. Active-site for beta-ketoacyl synthase 2 activity residues include cysteine 1529, histidine 1664, and histidine 1704. Positions 1967–2099 (AREPGARERA…GVVDELNEPA (133 aa)) are N-terminal hotdog fold 1. Residues 1967-2261 (AREPGARERA…SARWRKLAGA (295 aa)) form the PKS/mFAS DH 1 domain. The active-site Proton acceptor; for dehydratase activity 1 is histidine 1999. The interval 2113 to 2261 (AGERVDGAAL…SARWRKLAGA (149 aa)) is C-terminal hotdog fold 1. The active-site Proton donor; for dehydratase activity 1 is aspartate 2175. Residues 2426-2446 (DADEDDRDGREPAGGPPLRDD) are disordered. The Carrier 2 domain occupies 2702 to 2780 (PAARVDLHAL…AIARALDASA (79 aa)). A disordered region spans residues 2817–2836 (TPPDAGAPQRGAHAAAAEGS). Residues 2822 to 2835 (GAPQRGAHAAAAEG) show a composition bias toward low complexity. Residues 2862–2935 (ARVGARLSAL…ELTDYFVRRH (74 aa)) enclose the Carrier 3 domain. Serine 2896 bears the O-(pantetheine 4'-phosphoryl)serine mark. The Ketosynthase family 3 (KS3) 3 domain maps to 3005 to 3430 (ADAIAVIGLA…GANAHVIVRE (426 aa)). Residues cysteine 3175, histidine 3310, and histidine 3351 each act as for beta-ketoacyl synthase 3 activity in the active site. Residues 3526 to 3546 (PGKKQLRGNGRARRGDAPPAG) form a disordered region. The N-terminal hotdog fold 2 stretch occupies residues 3621 to 3743 (HPMLDANRSE…GRSPSRAARG (123 aa)). The PKS/mFAS DH 2 domain maps to 3621–3895 (HPMLDANRSE…SRAAASWRTA (275 aa)). The active-site Proton acceptor; for dehydratase activity 2 is the histidine 3650. A C-terminal hotdog fold 2 region spans residues 3758 to 3895 (RAAPAFDADA…SRAAASWRTA (138 aa)). Aspartate 3818 functions as the Proton donor; for dehydratase activity 2 in the catalytic mechanism. Positions 3917-3942 (PAAESPSAATSTSAATSPAISTSAAT) are disordered. Positions 4840–4914 (TRTAALLRSL…ALAAYVGSQL (75 aa)) constitute a Carrier 4 domain. At serine 4874 the chain carries O-(pantetheine 4'-phosphoryl)serine. Positions 4960–4992 (APRARTGADAPDTSLASSASSISSARASSPASP) are disordered. The Ketosynthase family 3 (KS3) 4 domain occupies 4998 to 5424 (SFDVAIVGAS…GVNAHVVLEE (427 aa)). Active-site for beta-ketoacyl synthase 4 activity residues include cysteine 5158, histidine 5293, and histidine 5339. In terms of domain architecture, Carrier 5 spans 5470–5544 (ARIEAVIRDA…ALRDHVAERI (75 aa)). At serine 5504 the chain carries O-(pantetheine 4'-phosphoryl)serine. Positions 5573–5603 (VSEATEASDASEASDASEASEASEASEASKA) are disordered.

Pantetheine 4'-phosphate serves as cofactor.

Its subcellular location is the cytoplasm. Its pathway is antibiotic biosynthesis. Involved in production of the polyketide antibiotic thailandamide. This chain is Polyketide synthase ThaG, found in Burkholderia thailandensis (strain ATCC 700388 / DSM 13276 / CCUG 48851 / CIP 106301 / E264).